The following is a 1324-amino-acid chain: Probable phosphoribosylformylglycinamidine synthase (1324 aa).

Residues 314 to 325 (GATTGTGGRIRD), 394 to 396 (SGF), and Ala681 contribute to the ATP site. Residues Asp682, Glu721, Asn725, and Asp894 each contribute to the Mg(2+) site. ATP is bound at residue Ser896. The Glutamine amidotransferase type-1 domain maps to 1053–1295 (RVAIIREEGS…LTWQWAESSE (243 aa)). Cys1146 serves as the catalytic Nucleophile. Residues His1280 and Asp1282 contribute to the active site.

This sequence in the N-terminal section; belongs to the FGAMS family.

It localises to the cytoplasm. It carries out the reaction N(2)-formyl-N(1)-(5-phospho-beta-D-ribosyl)glycinamide + L-glutamine + ATP + H2O = 2-formamido-N(1)-(5-O-phospho-beta-D-ribosyl)acetamidine + L-glutamate + ADP + phosphate + H(+). The protein operates within purine metabolism; IMP biosynthesis via de novo pathway; 5-amino-1-(5-phospho-D-ribosyl)imidazole from N(2)-formyl-N(1)-(5-phospho-D-ribosyl)glycinamide: step 1/2. Phosphoribosylformylglycinamidine synthase involved in the purines biosynthetic pathway. Catalyzes the ATP-dependent conversion of formylglycinamide ribonucleotide (FGAR) and glutamine to yield formylglycinamidine ribonucleotide (FGAM) and glutamate. The protein is Probable phosphoribosylformylglycinamidine synthase of Caenorhabditis elegans.